The primary structure comprises 320 residues: Stress-induced-phosphoprotein 1 (320 aa).

6 TPR repeats span residues 5–38 (AIAE…DPSN), 40–72 (TFYN…GRET), 80–113 (AKAM…FRDP), 140–173 (AQEE…DPEN), 175–207 (ILYS…DSKF), and 208–241 (IKGY…DPSN). The tract at residues 241-269 (NEEAREGVRNCLRSNDEDPEKAKERSLAD) is disordered. Over residues 242-269 (EEAREGVRNCLRSNDEDPEKAKERSLAD) the composition is skewed to basic and acidic residues. In terms of domain architecture, STI1 spans 269 to 308 (DPEVQEILRDPGMRMILEQMSNDPGAVREHLKNPEIFQKL).

As to quaternary structure, forms a complex with hsp-1/hsp70 and daf-21/hsp90. Interacts with daf-21/hsp90 (via the C-terminal MEEVD pentapeptide). Expressed ubiquitously in the whole body. Detected predominantly in the pharyngeal muscles, vulva epithelial cells, striated body-wall muscles, spermathecae and intestinal cell ring. Also observed in the tail regions of hermaphrodite and in the sensory rays and spicules of males.

Its subcellular location is the cytoplasm. Its function is as follows. Plays a role in gonad development. Up-regulates longevity and thermotolerance. Binds daf-21/hsp90 and inhibits its ATPase activity. This Caenorhabditis elegans protein is Stress-induced-phosphoprotein 1.